The chain runs to 299 residues: MTLRIGTRGSKLATTQAGHMRDRLKHFGRDAELTIVTTPGDVNMSPVERIGVGVFTQALRDALVADEIDVAVHSFKDLPTAPDPRFHLVVPTRADARDALIARDGLTLEELPEGAKVGTSAPRRISQLKALRPDLEILPLRGNIDTRMGKVTSGELDAVVLAFAGLSRVGMQDRATQVFDPDMLMPAPAQGALAIECRVEDEDIITGLNMLMHADTYVTAVAERTVLNRLEAGCTAPVAAHATLDGYAGDTMTLTAGVFALDGSEQLVFSAQGAGERPEELAEQVAAQLIEQGAATLLG.

Cys-234 is subject to S-(dipyrrolylmethanemethyl)cysteine.

It belongs to the HMBS family. As to quaternary structure, monomer. Dipyrromethane serves as cofactor.

It carries out the reaction 4 porphobilinogen + H2O = hydroxymethylbilane + 4 NH4(+). It functions in the pathway porphyrin-containing compound metabolism; protoporphyrin-IX biosynthesis; coproporphyrinogen-III from 5-aminolevulinate: step 2/4. Functionally, tetrapolymerization of the monopyrrole PBG into the hydroxymethylbilane pre-uroporphyrinogen in several discrete steps. The sequence is that of Porphobilinogen deaminase from Corynebacterium efficiens (strain DSM 44549 / YS-314 / AJ 12310 / JCM 11189 / NBRC 100395).